Consider the following 125-residue polypeptide: Snaclec botrocetin subunit beta (125 aa).

Cystine bridges form between Cys2/Cys13, Cys30/Cys121, and Cys98/Cys113. Residues 9–122 (YEGHCYRFFK…CTRFKNFVCE (114 aa)) enclose the C-type lectin domain.

This sequence belongs to the snaclec family. In terms of assembly, heterodimer of subunits alpha and beta; disulfide-linked. Botrocetin and vWF form a soluble complex. Expressed by the venom gland.

The protein localises to the secreted. Functionally, snaclec that binds to von Willebrand factor (VWF) and induces its interaction with GPIbalpha (GP1BA) (via the vWF A1 domain), resulting in platelet aggregation. This chain is Snaclec botrocetin subunit beta, found in Bothrops jararaca (Jararaca).